A 304-amino-acid polypeptide reads, in one-letter code: Glutamyl-Q tRNA(Asp) synthetase (304 aa).

L-glutamate-binding positions include 14 to 18 (RFAPS) and Glu-50. The short motif at 17–27 (PSPSGPLHFGS) is the 'HIGH' region element. Residues Cys-106, Cys-108, Tyr-120, and Cys-124 each contribute to the Zn(2+) site. Positions 178 and 196 each coordinate L-glutamate. Residues 234–238 (KLSKQ) carry the 'KMSKS' region motif. Lys-237 lines the ATP pocket.

The protein belongs to the class-I aminoacyl-tRNA synthetase family. GluQ subfamily. Requires Zn(2+) as cofactor.

Functionally, catalyzes the tRNA-independent activation of glutamate in presence of ATP and the subsequent transfer of glutamate onto a tRNA(Asp). Glutamate is transferred on the 2-amino-5-(4,5-dihydroxy-2-cyclopenten-1-yl) moiety of the queuosine in the wobble position of the QUC anticodon. The protein is Glutamyl-Q tRNA(Asp) synthetase of Vibrio cholerae serotype O1 (strain ATCC 39315 / El Tor Inaba N16961).